The chain runs to 1334 residues: CRISPR-associated endonuclease Cas9 (1334 aa).

The For RuvC-like nuclease domain role is filled by aspartate 10. Mn(2+) contacts are provided by aspartate 10, glutamate 765, and glutamate 769. One can recognise an HNH Cas9-type domain in the interval 773 to 924 (TGKGKNNSRP…DKARFIHRQL (152 aa)). The active-site Proton acceptor for HNH nuclease domain is the histidine 843. Mn(2+) is bound at residue histidine 986.

The protein belongs to the CRISPR-associated protein Cas9 family. Subtype II-A subfamily. As to quaternary structure, monomer. Binds crRNA and tracrRNA. Mg(2+) is required as a cofactor.

Functionally, CRISPR (clustered regularly interspaced short palindromic repeat) is an adaptive immune system that provides protection against mobile genetic elements (viruses, transposable elements and conjugative plasmids). CRISPR clusters contain spacers, sequences complementary to antecedent mobile elements, and target invading nucleic acids. CRISPR clusters are transcribed and processed into CRISPR RNA (crRNA). In type II CRISPR systems correct processing of pre-crRNA requires a trans-encoded small RNA (tracrRNA), endogenous ribonuclease 3 (rnc) and this protein. The tracrRNA serves as a guide for ribonuclease 3-aided processing of pre-crRNA. Subsequently Cas9/crRNA/tracrRNA endonucleolytically cleaves linear or circular dsDNA target complementary to the spacer; Cas9 is inactive in the absence of the 2 guide RNAs (gRNA). Cas9 recognizes the protospacer adjacent motif (PAM) in the CRISPR repeat sequences to help distinguish self versus nonself, as targets within the bacterial CRISPR locus do not have PAMs. PAM recognition is also required for catalytic activity. The chain is CRISPR-associated endonuclease Cas9 from Listeria innocua serovar 6a (strain ATCC BAA-680 / CLIP 11262).